The sequence spans 163 residues: Phosphopantetheine adenylyltransferase (163 aa).

Position 9 (T9) interacts with substrate. ATP contacts are provided by residues 9–10 (TF) and H17. 3 residues coordinate substrate: K41, L76, and R90. Residues 91–93 (GLR), E101, and 126–132 (YSFISST) each bind ATP.

This sequence belongs to the bacterial CoaD family. As to quaternary structure, homohexamer. Mg(2+) serves as cofactor.

The protein resides in the cytoplasm. The catalysed reaction is (R)-4'-phosphopantetheine + ATP + H(+) = 3'-dephospho-CoA + diphosphate. It functions in the pathway cofactor biosynthesis; coenzyme A biosynthesis; CoA from (R)-pantothenate: step 4/5. Functionally, reversibly transfers an adenylyl group from ATP to 4'-phosphopantetheine, yielding dephospho-CoA (dPCoA) and pyrophosphate. This is Phosphopantetheine adenylyltransferase from Dichelobacter nodosus (strain VCS1703A).